The chain runs to 494 residues: UDP-glucose 6-dehydrogenase (494 aa).

Residues 11-16, Asp-36, Arg-41, and 89-93 contribute to the NAD(+) site; these read GAGYVG and VNTPT. The tract at residues 88–110 is disordered; that stretch reads SVNTPTKTYGMGKGRAADLKYIE. Lys-107 is modified (N6-acetyllysine). The tract at residues 129–135 is allosteric switch region; the sequence is KSTVPVR. 130 to 132 lines the NAD(+) pocket; sequence STV. The active-site Proton donor/acceptor is the Glu-161. Substrate-binding positions include 161-165, 220-224, Arg-260, and 267-273; these read EFLAE, KLAAN, and KASVGFG. Glu-165 is an NAD(+) binding site. The active-site Proton donor/acceptor is the Lys-220. Cys-276 serves as the catalytic Nucleophile. Position 276 to 279 (276 to 279) interacts with NAD(+); the sequence is CFQK. The interval 321–325 is important for formation of active hexamer structure; that stretch reads SLFNT. 338-339 provides a ligand contact to substrate; it reads FK. Arg-346 contacts NAD(+). Position 442 (Arg-442) interacts with substrate. A disordered region spans residues 466–494; the sequence is VSSKRIPYAPSGEIPKFSLQDPPNKKPKV. Ser-476 carries the phosphoserine modification.

The protein belongs to the UDP-glucose/GDP-mannose dehydrogenase family. As to quaternary structure, homohexamer.

The enzyme catalyses UDP-alpha-D-glucose + 2 NAD(+) + H2O = UDP-alpha-D-glucuronate + 2 NADH + 3 H(+). It participates in nucleotide-sugar biosynthesis; UDP-alpha-D-glucuronate biosynthesis; UDP-alpha-D-glucuronate from UDP-alpha-D-glucose: step 1/1. UDP-alpha-D-xylose (UDX) acts as a feedback inhibitor. It binds at the same site as the substrate, but functions as allosteric inhibitor by triggering a conformation change that disrupts the active hexameric ring structure and gives rise to an inactive, horseshoe-shaped hexamer. Functionally, catalyzes the formation of UDP-alpha-D-glucuronate, a constituent of complex glycosaminoglycans. Required for the biosynthesis of chondroitin sulfate and heparan sulfate. Required for embryonic development via its role in the biosynthesis of glycosaminoglycans. Required for proper brain and neuronal development. The chain is UDP-glucose 6-dehydrogenase (UGDH) from Pongo abelii (Sumatran orangutan).